Reading from the N-terminus, the 173-residue chain is Nicotinamide-nucleotide adenylyltransferase (173 aa).

It belongs to the archaeal NMN adenylyltransferase family.

Its subcellular location is the cytoplasm. It carries out the reaction beta-nicotinamide D-ribonucleotide + ATP + H(+) = diphosphate + NAD(+). Its pathway is cofactor biosynthesis; NAD(+) biosynthesis; NAD(+) from nicotinamide D-ribonucleotide: step 1/1. The chain is Nicotinamide-nucleotide adenylyltransferase from Methanosarcina mazei (strain ATCC BAA-159 / DSM 3647 / Goe1 / Go1 / JCM 11833 / OCM 88) (Methanosarcina frisia).